The following is a 441-amino-acid chain: DNA primase DnaG (441 aa).

The Toprim domain maps to 165-241 (DTIIIVEGRA…DIDYVARAPP (77 aa)). Positions 171, 215, and 217 each coordinate Mg(2+). Residues 299–315 (KEEVAERGEEMESKAEG) are compositionally biased toward basic and acidic residues. Positions 299 to 320 (KEEVAERGEEMESKAEGAEQPT) are disordered.

It belongs to the archaeal DnaG primase family. As to quaternary structure, forms a ternary complex with MCM helicase and DNA. Component of the archaeal exosome complex. Mg(2+) serves as cofactor.

The catalysed reaction is ssDNA + n NTP = ssDNA/pppN(pN)n-1 hybrid + (n-1) diphosphate.. Functionally, RNA polymerase that catalyzes the synthesis of short RNA molecules used as primers for DNA polymerase during DNA replication. Also part of the exosome, which is a complex involved in RNA degradation. Acts as a poly(A)-binding protein that enhances the interaction between heteromeric, adenine-rich transcripts and the exosome. The sequence is that of DNA primase DnaG from Ignicoccus hospitalis (strain KIN4/I / DSM 18386 / JCM 14125).